Consider the following 208-residue polypeptide: NAD(P)H-quinone oxidoreductase subunit I (208 aa).

2 consecutive 4Fe-4S ferredoxin-type domains span residues 55–84 and 95–124; these read GRIH…VDWV and RNYS…MTEE. C64, C67, C70, C74, C104, C107, C110, and C114 together coordinate [4Fe-4S] cluster.

It belongs to the complex I 23 kDa subunit family. As to quaternary structure, NDH-1 is composed of at least 11 different subunits. [4Fe-4S] cluster is required as a cofactor.

The protein localises to the cellular thylakoid membrane. It catalyses the reaction a plastoquinone + NADH + (n+1) H(+)(in) = a plastoquinol + NAD(+) + n H(+)(out). The catalysed reaction is a plastoquinone + NADPH + (n+1) H(+)(in) = a plastoquinol + NADP(+) + n H(+)(out). Functionally, NDH-1 shuttles electrons from an unknown electron donor, via FMN and iron-sulfur (Fe-S) centers, to quinones in the respiratory and/or the photosynthetic chain. The immediate electron acceptor for the enzyme in this species is believed to be plastoquinone. Couples the redox reaction to proton translocation, and thus conserves the redox energy in a proton gradient. The sequence is that of NAD(P)H-quinone oxidoreductase subunit I from Prochlorococcus marinus (strain MIT 9312).